We begin with the raw amino-acid sequence, 208 residues long: Cysteine-rich protein 2 (208 aa).

Residues 5–57 enclose the LIM zinc-binding 1 domain; that stretch reads CPKCDKTVYFAEKVSSLGKDWHRFCLRCEHCSKTLTPGGHAEHDGKPFCHKPC. Lys-23 is modified (N6-acetyllysine). Residues 98-117 are disordered; the sequence is TEERKASGPPKGPSKASSVT. Ser-104 carries the post-translational modification Phosphoserine. The segment covering 104-115 has biased composition (low complexity); it reads SGPPKGPSKASS. The LIM zinc-binding 2 domain occupies 126–178; that stretch reads CPRCNKRVYFAEKVTSLGKDWHRPCLRCERCGKTLTPGGHAEHDGQPYCHKPC. 2 positions are modified to N6-acetyllysine: Lys-138 and Lys-144.

As to quaternary structure, interacts with TGFB1I1.

The sequence is that of Cysteine-rich protein 2 (CRIP2) from Bos taurus (Bovine).